The sequence spans 297 residues: 3-methyl-2-oxobutanoate hydroxymethyltransferase (297 aa).

Residues 1 to 12 (MSEQISEQSEQN) are compositionally biased toward polar residues. The tract at residues 1–36 (MSEQISEQSEQNVYGACPPVPAGESSPSAASAPRTK) is disordered. Residues 22–33 (AGESSPSAASAP) are compositionally biased toward low complexity. 2 residues coordinate Mg(2+): Asp78 and Asp117. 3-methyl-2-oxobutanoate is bound by residues 78–79 (DS), Asp117, and Lys147. Residue Glu149 coordinates Mg(2+). The active-site Proton acceptor is the Glu215.

It belongs to the PanB family. In terms of assembly, homodecamer; pentamer of dimers. The cofactor is Mg(2+).

It is found in the cytoplasm. It catalyses the reaction 3-methyl-2-oxobutanoate + (6R)-5,10-methylene-5,6,7,8-tetrahydrofolate + H2O = 2-dehydropantoate + (6S)-5,6,7,8-tetrahydrofolate. Its pathway is cofactor biosynthesis; (R)-pantothenate biosynthesis; (R)-pantoate from 3-methyl-2-oxobutanoate: step 1/2. In terms of biological role, catalyzes the reversible reaction in which hydroxymethyl group from 5,10-methylenetetrahydrofolate is transferred onto alpha-ketoisovalerate to form ketopantoate. The polypeptide is 3-methyl-2-oxobutanoate hydroxymethyltransferase (Mycobacterium ulcerans (strain Agy99)).